The chain runs to 242 residues: Zinc finger protein ZOP1 (242 aa).

The Matrin-type zinc-finger motif lies at 11–42; sequence KWCEFCKIWIQNNPTSIRNHDLGKRHRECVDK. Positions 42–71 form a coiled coil; the sequence is KKLTDMRERSAAKDKELKKNEKLLQQIEAK. The segment at 154 to 242 is disordered; that stretch reads VKKPVSSSGA…PLLGLYNRPF (89 aa). Residues 155 to 172 are compositionally biased toward low complexity; it reads KKPVSSSGAGPSVGKPPG. Basic and acidic residues predominate over residues 201-233; the sequence is RQDEKPKKVSAEEKAALKAREAARKRVEDREKP.

In terms of assembly, component of a pre-mRNA splicing complex. Interacts with STA1. Interacts with PRP31.

It is found in the nucleus. The protein localises to the cajal body. In terms of biological role, nucleic acid-binding protein that promotes Pol IV-dependent small interfering RNA (siRNA) accumulation, DNA methylation and transcriptional silencing. May possess both RNA-directed DNA methylation (RdDM)-dependent and -independent roles in transcriptional silencing. Acts as a pre-mRNA splicing factor that associates with several typical components of the splicing machinery as well as with Pol II. This Arabidopsis thaliana (Mouse-ear cress) protein is Zinc finger protein ZOP1.